The primary structure comprises 286 residues: Pantothenate synthetase (286 aa).

30-37 (MGFLHEGH) contacts ATP. Catalysis depends on His37, which acts as the Proton donor. Residue Gln61 participates in (R)-pantoate binding. Position 61 (Gln61) interacts with beta-alanine. 147 to 150 (GLKD) contributes to the ATP binding site. Gln153 provides a ligand contact to (R)-pantoate. ATP contacts are provided by residues Val176 and 184–187 (KSSR).

The protein belongs to the pantothenate synthetase family. As to quaternary structure, homodimer.

It localises to the cytoplasm. The enzyme catalyses (R)-pantoate + beta-alanine + ATP = (R)-pantothenate + AMP + diphosphate + H(+). Its pathway is cofactor biosynthesis; (R)-pantothenate biosynthesis; (R)-pantothenate from (R)-pantoate and beta-alanine: step 1/1. In terms of biological role, catalyzes the condensation of pantoate with beta-alanine in an ATP-dependent reaction via a pantoyl-adenylate intermediate. This is Pantothenate synthetase from Bacillus subtilis (strain 168).